The chain runs to 205 residues: MEINYELYLITDRRFLKGRQLKKVVEDAILGGVTIVQVREKDVSTREFYNVAKEVKEVTDYYKVPIIINDRLDIAQAIDASGVHLGQKDMHLNIAREILGKDKIIGISVGNVKEALQAQNNGADYLGIGTIFPTGSKKDVDAIIGIDGLSKIKDSISIPSVAIGGINKTNFKDVLKTGIEGISVISAILDEDDIKLAANNLLINK.

4-amino-2-methyl-5-(diphosphooxymethyl)pyrimidine contacts are provided by residues Q37–K41 and N69. 2 residues coordinate Mg(2+): D70 and D89. S108 serves as a coordination point for 4-amino-2-methyl-5-(diphosphooxymethyl)pyrimidine. T134–S136 is a binding site for 2-[(2R,5Z)-2-carboxy-4-methylthiazol-5(2H)-ylidene]ethyl phosphate. A 4-amino-2-methyl-5-(diphosphooxymethyl)pyrimidine-binding site is contributed by K137. 2-[(2R,5Z)-2-carboxy-4-methylthiazol-5(2H)-ylidene]ethyl phosphate-binding positions include G165 and I185–S186.

Belongs to the thiamine-phosphate synthase family. Mg(2+) is required as a cofactor.

It catalyses the reaction 2-[(2R,5Z)-2-carboxy-4-methylthiazol-5(2H)-ylidene]ethyl phosphate + 4-amino-2-methyl-5-(diphosphooxymethyl)pyrimidine + 2 H(+) = thiamine phosphate + CO2 + diphosphate. It carries out the reaction 2-(2-carboxy-4-methylthiazol-5-yl)ethyl phosphate + 4-amino-2-methyl-5-(diphosphooxymethyl)pyrimidine + 2 H(+) = thiamine phosphate + CO2 + diphosphate. The enzyme catalyses 4-methyl-5-(2-phosphooxyethyl)-thiazole + 4-amino-2-methyl-5-(diphosphooxymethyl)pyrimidine + H(+) = thiamine phosphate + diphosphate. It functions in the pathway cofactor biosynthesis; thiamine diphosphate biosynthesis; thiamine phosphate from 4-amino-2-methyl-5-diphosphomethylpyrimidine and 4-methyl-5-(2-phosphoethyl)-thiazole: step 1/1. Its function is as follows. Condenses 4-methyl-5-(beta-hydroxyethyl)thiazole monophosphate (THZ-P) and 2-methyl-4-amino-5-hydroxymethyl pyrimidine pyrophosphate (HMP-PP) to form thiamine monophosphate (TMP). This is Thiamine-phosphate synthase from Clostridium botulinum (strain ATCC 19397 / Type A).